A 549-amino-acid polypeptide reads, in one-letter code: MTRRWALPLLLIAFGLFYLLPLATHGLWIPDETRYAQISQEMLLTGKWASPHFMGIRYFEKPVAGYWMIAIGQALFGDNLFGVRVASALSTGLSVVLAYLLARRLWNDPRKSLASALLYMSFTVVALQAGYANLDPQFTFWVNLSLVALWFTFDCRTTRGQVLAWVALGLACGMGFMTKGFLAWLLPVLVALPYAIWQKRLRSLLIYGGIGVLVAILISLPWALAVHSQEPDYWRFFFWHEHIRRFAGDDAQHASPWWYYLPLLVGFSVPWVLLLPAGLKQAWQQRRQNSSGFLLLWLVLPLAFFSLSKGKLPAYILPCLLPLALLMGNTLVDRLAAGKTRLLAFNGVLNLVAGLLGLLALVYFQMKKPVYVDEPQHLVLVYVLLLGWILSNLLQAMRPLTLWAAPALGSFLLVALAPAALPNSVVYNKIPDQFIIDHVAELGQAKALLSNDLGAASALAWRLRRPDVTLYNTEGEVKYGLGYEDTAARKVDLNQVQPWIAEARKQGSIGVVMRVKSSDEEHEVELLPKDAKRYEQGNIVIFIIPQSQP.

Helical transmembrane passes span 9–29 (LLLI…GLWI), 80–102 (LFGV…YLLA), 112–132 (SLAS…AGYA), 133–153 (NLDP…WFTF), 176–196 (FMTK…PYAI), 204–224 (LLIY…PWAL), 257–277 (WWYY…LLPA), 290–310 (SSGF…LSKG), 312–332 (LPAY…NTLV), 342–362 (LLAF…LALV), 377–397 (HLVL…LQAM), and 402–422 (LWAA…AALP).

Belongs to the glycosyltransferase 83 family.

It localises to the cell inner membrane. The enzyme catalyses 4-amino-4-deoxy-alpha-L-arabinopyranosyl di-trans,octa-cis-undecaprenyl phosphate + lipid IVA = lipid IIA + di-trans,octa-cis-undecaprenyl phosphate.. It participates in lipopolysaccharide metabolism; 4-amino-4-deoxy-beta-L-arabinose-lipid A biosynthesis. Functionally, catalyzes the transfer of the L-Ara4N moiety of the glycolipid undecaprenyl phosphate-alpha-L-Ara4N to lipid A. The modified arabinose is attached to lipid A and is required for resistance to polymyxin and cationic antimicrobial peptides. The chain is Undecaprenyl phosphate-alpha-4-amino-4-deoxy-L-arabinose arabinosyl transferase 1 from Pseudomonas fluorescens (strain ATCC BAA-477 / NRRL B-23932 / Pf-5).